Here is a 420-residue protein sequence, read N- to C-terminus: Homeobox-containing protein 1 (420 aa).

One can recognise an HNF-p1 domain in the interval 18–49 (DEPRFTIEQIDLLQRLRRTGMTKHEILHALET). Residues 56 to 139 (EHSDKFGRRS…GKMSPTRYHA (84 aa)) form a disordered region. Residue lysine 60 forms a Glycyl lysine isopeptide (Lys-Gly) (interchain with G-Cter in SUMO2) linkage. Composition is skewed to low complexity over residues 64–73 (RSSYGGSSYG) and 81–93 (ASSS…TQTQ). The span at 94–132 (HSGMSPSPSNSYDTSPQPCTTNQNGRENNERLSTSNGKM) shows a compositional bias: polar residues. Lysine 131 participates in a covalent cross-link: Glycyl lysine isopeptide (Lys-Gly) (interchain with G-Cter in SUMO2). One can recognise a POU-specific atypical domain in the interval 145–241 (RSYSFEASEE…PGATLSMRPA (97 aa)). A Phosphoserine modification is found at serine 148. Lysine 161 participates in a covalent cross-link: Glycyl lysine isopeptide (Lys-Gly) (interchain with G-Cter in SUMO2). Phosphoserine is present on serine 170. Glycyl lysine isopeptide (Lys-Gly) (interchain with G-Cter in SUMO2) cross-links involve residues lysine 174, lysine 217, and lysine 310. Residues 267–341 (RRGSRFTWRK…NRRKEIKRRA (75 aa)) constitute a DNA-binding region (homeobox). The interval 353-385 (IDVQSPGGHSNSDDVDGNDYSEQDDSTSHSDHQ) is disordered. Positions 365 to 377 (DDVDGNDYSEQDD) are enriched in acidic residues. A Glycyl lysine isopeptide (Lys-Gly) (interchain with G-Cter in SUMO1); alternate cross-link involves residue lysine 413. Lysine 413 participates in a covalent cross-link: Glycyl lysine isopeptide (Lys-Gly) (interchain with G-Cter in SUMO2); alternate.

In terms of assembly, associates with the telomerase holoenzyme complex. Interacts with DKC1, XRCC6 and COIL. Ubiquitous. Detected in pancreas, brain, spleen, placenta, prostate, thymus, liver, heart, bone marrow, skeletal muscle, stomach, uterus, testis, kidney, ovary, colon, lung, cardiac muscle and thyroid gland.

Its subcellular location is the nucleus. It is found in the cytoplasm. It localises to the chromosome. The protein resides in the telomere. The protein localises to the cajal body. Its subcellular location is the PML body. Binds directly to 5'-TTAGGG-3' repeats in telomeric DNA. Associates with the telomerase complex at sites of active telomere processing and positively regulates telomere elongation. Important for TERT binding to chromatin, indicating a role in recruitment of the telomerase complex to telomeres. Also plays a role in the alternative lengthening of telomeres (ALT) pathway in telomerase-negative cells where it promotes formation and/or maintenance of ALT-associated promyelocytic leukemia bodies (APBs). Enhances formation of telomere C-circles in ALT cells, suggesting a possible role in telomere recombination. Might also be involved in the DNA damage response at telomeres. The protein is Homeobox-containing protein 1 of Homo sapiens (Human).